The sequence spans 142 residues: Protein-export protein SecB (142 aa).

Belongs to the SecB family. As to quaternary structure, homotetramer, a dimer of dimers. One homotetramer interacts with 1 SecA dimer.

Its subcellular location is the cytoplasm. Functionally, one of the proteins required for the normal export of preproteins out of the cell cytoplasm. It is a molecular chaperone that binds to a subset of precursor proteins, maintaining them in a translocation-competent state. It also specifically binds to its receptor SecA. This is Protein-export protein SecB from Buchnera aphidicola subsp. Acyrthosiphon pisum (strain 5A).